The sequence spans 213 residues: ATP phosphoribosyltransferase (213 aa).

Belongs to the ATP phosphoribosyltransferase family. Short subfamily. Heteromultimer composed of HisG and HisZ subunits.

It is found in the cytoplasm. It catalyses the reaction 1-(5-phospho-beta-D-ribosyl)-ATP + diphosphate = 5-phospho-alpha-D-ribose 1-diphosphate + ATP. It functions in the pathway amino-acid biosynthesis; L-histidine biosynthesis; L-histidine from 5-phospho-alpha-D-ribose 1-diphosphate: step 1/9. Functionally, catalyzes the condensation of ATP and 5-phosphoribose 1-diphosphate to form N'-(5'-phosphoribosyl)-ATP (PR-ATP). Has a crucial role in the pathway because the rate of histidine biosynthesis seems to be controlled primarily by regulation of HisG enzymatic activity. The sequence is that of ATP phosphoribosyltransferase (hisG) from Listeria innocua serovar 6a (strain ATCC BAA-680 / CLIP 11262).